The sequence spans 105 residues: Replication restart protein PriB (105 aa).

The 102-residue stretch at 1-102 folds into the SSB domain; it reads MTANRLTLSG…LHAEQIELID (102 aa).

Belongs to the PriB family. Homodimer. Interacts with PriA and DnaT. Component of the replication restart primosome. Primosome assembly occurs via a 'hand-off' mechanism. PriA binds to replication forks, subsequently PriB then DnaT bind; DnaT then displaces ssDNA to generate the helicase loading substrate.

Its function is as follows. Involved in the restart of stalled replication forks, which reloads the replicative helicase on sites other than the origin of replication; the PriA-PriB pathway is the major replication restart pathway. During primosome assembly it facilitates complex formation between PriA and DnaT on DNA; stabilizes PriA on DNA. Stimulates the DNA unwinding activity of PriA helicase. In Serratia proteamaculans (strain 568), this protein is Replication restart protein PriB.